Consider the following 603-residue polypeptide: Probable L-gulonolactone oxidase 6 (603 aa).

A signal peptide spans 1–35 (MAFTSSPSYGSLNAAFWRTIFVVHCISTLVFTTIS). Positions 64–246 (STCRAANVAY…SQVTLKLQPM (183 aa)) constitute an FAD-binding PCMH-type domain.

This sequence belongs to the oxygen-dependent FAD-linked oxidoreductase family. FAD is required as a cofactor.

The catalysed reaction is L-gulono-1,4-lactone + O2 = L-ascorbate + H2O2 + H(+). It participates in cofactor biosynthesis; L-ascorbate biosynthesis. In terms of biological role, may be involved in the biosynthesis of ascorbic acid. The sequence is that of Probable L-gulonolactone oxidase 6 from Arabidopsis thaliana (Mouse-ear cress).